The following is a 410-amino-acid chain: Phosphoglycerate kinase (410 aa).

Residues Asp-22 to Asn-24, Arg-39, His-62 to Arg-65, Arg-119, and Arg-159 each bind substrate. Residues Glu-332 and Gly-358–Leu-361 contribute to the ATP site.

Belongs to the phosphoglycerate kinase family. As to quaternary structure, homodimer.

The protein localises to the cytoplasm. It catalyses the reaction (2R)-3-phosphoglycerate + ATP = (2R)-3-phospho-glyceroyl phosphate + ADP. The protein operates within carbohydrate degradation; glycolysis; pyruvate from D-glyceraldehyde 3-phosphate: step 2/5. This Methanothermus fervidus (strain ATCC 43054 / DSM 2088 / JCM 10308 / V24 S) protein is Phosphoglycerate kinase (pgk).